Here is a 662-residue protein sequence, read N- to C-terminus: Transketolase (662 aa).

His-28 is a binding site for substrate. Thiamine diphosphate is bound by residues His-68 and 115–117 (GPL). Residue Asp-156 coordinates Mg(2+). 2 residues coordinate thiamine diphosphate: Gly-157 and Asn-186. Mg(2+) contacts are provided by Asn-186 and Ile-188. Substrate is bound by residues His-261, Arg-356, and Ser-383. His-261 provides a ligand contact to thiamine diphosphate. Catalysis depends on Glu-410, which acts as the Proton donor. Position 436 (Phe-436) interacts with thiamine diphosphate. Substrate contacts are provided by His-460, Asp-468, and Arg-519.

This sequence belongs to the transketolase family. As to quaternary structure, homodimer. Mg(2+) serves as cofactor. The cofactor is Ca(2+). Requires Mn(2+) as cofactor. It depends on Co(2+) as a cofactor. Thiamine diphosphate is required as a cofactor.

The enzyme catalyses D-sedoheptulose 7-phosphate + D-glyceraldehyde 3-phosphate = aldehydo-D-ribose 5-phosphate + D-xylulose 5-phosphate. It functions in the pathway carbohydrate biosynthesis; Calvin cycle. Its pathway is carbohydrate degradation; pentose phosphate pathway. In terms of biological role, catalyzes the transfer of a two-carbon ketol group from a ketose donor to an aldose acceptor, via a covalent intermediate with the cofactor thiamine pyrophosphate. This is Transketolase (tkt) from Staphylococcus aureus (strain MRSA252).